The chain runs to 428 residues: Enolase (428 aa).

(2R)-2-phosphoglycerate is bound at residue Gln163. Glu205 acts as the Proton donor in catalysis. Mg(2+)-binding residues include Asp242, Glu285, and Asp312. Lys337, Arg366, Ser367, and Lys388 together coordinate (2R)-2-phosphoglycerate. Lys337 acts as the Proton acceptor in catalysis.

It belongs to the enolase family. Mg(2+) serves as cofactor.

The protein resides in the cytoplasm. Its subcellular location is the secreted. It is found in the cell surface. The enzyme catalyses (2R)-2-phosphoglycerate = phosphoenolpyruvate + H2O. The protein operates within carbohydrate degradation; glycolysis; pyruvate from D-glyceraldehyde 3-phosphate: step 4/5. Catalyzes the reversible conversion of 2-phosphoglycerate (2-PG) into phosphoenolpyruvate (PEP). It is essential for the degradation of carbohydrates via glycolysis. This chain is Enolase, found in Nitrosomonas europaea (strain ATCC 19718 / CIP 103999 / KCTC 2705 / NBRC 14298).